A 679-amino-acid polypeptide reads, in one-letter code: Oxidant-induced cell-cycle arrest protein 5 (679 aa).

Residues 50-441 form the Rab-GAP TBC domain; sequence GVPPQLRHVV…RVWDLLLGWR (392 aa). Residues 135–153 are compositionally biased toward low complexity; that stretch reads NPAGSSSNANTTNIATPTP. 3 disordered regions span residues 135 to 159, 250 to 271, and 524 to 544; these read NPAG…SSDA, TNNG…NNTN, and QSKA…NDKS. The segment covering 524–539 has biased composition (polar residues); sequence QSKAQKDNTVPSPGSD.

It belongs to the OCA5 family.

Its subcellular location is the cytoplasm. Its function is as follows. Required for replication of brome mosaic virus (BMV), a positive-strand RNA virus. In Saccharomyces cerevisiae (strain RM11-1a) (Baker's yeast), this protein is Oxidant-induced cell-cycle arrest protein 5 (OCA5).